We begin with the raw amino-acid sequence, 56 residues long: Prokaryotic ubiquitin-like protein UBact (56 aa).

A disordered region spans residues 1 to 56 (MPDQAQKTRPVGPGPSGGGEGPGSPKVEKPNTEELLKRMRKVDPDQAKRYRQRTGQ). A compositionally biased stretch (basic and acidic residues) spans 26 to 48 (KVEKPNTEELLKRMRKVDPDQAK). Q56 carries the post-translational modification Deamidated glutamine. Q56 is covalently cross-linked (Isoglutamyl lysine isopeptide (Gln-Lys) (interchain with K-? in acceptor proteins)).

This sequence belongs to the ubiquitin-like protein UBact family. In terms of processing, may be modified by deamidation of its C-terminal glutamine to glutamate by the adjacently encoded deamidase. This could be a prerequisite to the subsequent conjugation, as shown in the other prokaryotic ubiquitin-like protein Pup.

Its function is as follows. May function as a protein modifier covalently attached to lysine residues of substrate proteins. This may serve to target the modified proteins for degradation by proteasomes. The protein is Prokaryotic ubiquitin-like protein UBact of Pedosphaera parvula (strain Ellin514).